We begin with the raw amino-acid sequence, 341 residues long: NADH-ubiquinone oxidoreductase chain 2 (341 aa).

A run of 9 helical transmembrane segments spans residues 8-28, 61-81, 95-115, 145-165, 174-191, 195-215, 238-258, 272-292, and 321-341; these read IFLI…SWLG, FLTQ…LMFL, ILIL…FWFP, FIYN…SLGG, LMAF…LAMM, MLWM…VLMF, LLIF…GFLP, LFIL…YLRL, and LIFN…YIIM.

The protein belongs to the complex I subunit 2 family.

It is found in the mitochondrion inner membrane. It carries out the reaction a ubiquinone + NADH + 5 H(+)(in) = a ubiquinol + NAD(+) + 4 H(+)(out). In terms of biological role, core subunit of the mitochondrial membrane respiratory chain NADH dehydrogenase (Complex I) that is believed to belong to the minimal assembly required for catalysis. Complex I functions in the transfer of electrons from NADH to the respiratory chain. The immediate electron acceptor for the enzyme is believed to be ubiquinone. The sequence is that of NADH-ubiquinone oxidoreductase chain 2 (mt:ND2) from Anopheles gambiae (African malaria mosquito).